A 280-amino-acid polypeptide reads, in one-letter code: 4-diphosphocytidyl-2-C-methyl-D-erythritol kinase (280 aa).

Lysine 9 is an active-site residue. Residue 92–102 (PMGGGLGGGSS) coordinates ATP. Aspartate 134 is an active-site residue.

This sequence belongs to the GHMP kinase family. IspE subfamily.

The enzyme catalyses 4-CDP-2-C-methyl-D-erythritol + ATP = 4-CDP-2-C-methyl-D-erythritol 2-phosphate + ADP + H(+). It functions in the pathway isoprenoid biosynthesis; isopentenyl diphosphate biosynthesis via DXP pathway; isopentenyl diphosphate from 1-deoxy-D-xylulose 5-phosphate: step 3/6. In terms of biological role, catalyzes the phosphorylation of the position 2 hydroxy group of 4-diphosphocytidyl-2C-methyl-D-erythritol. This is 4-diphosphocytidyl-2-C-methyl-D-erythritol kinase from Nitrosococcus oceani (strain ATCC 19707 / BCRC 17464 / JCM 30415 / NCIMB 11848 / C-107).